Here is an 88-residue protein sequence, read N- to C-terminus: Alpha-latrotoxin-associated low molecular weight protein (88 aa).

The signal sequence occupies residues 1–18 (MSKLFFVVFLCLIISVFA).

The protein belongs to the arthropod CHH/MIH/GIH/VIH hormone family. As to expression, expressed by the venom gland.

It localises to the secreted. May increase the toxicity of alpha-latrotoxin and/or other venom components. Is non-toxic to mice and to the cockroach Periplaneta americana. The polypeptide is Alpha-latrotoxin-associated low molecular weight protein (Latrodectus tredecimguttatus (Mediterranean black widow spider)).